Reading from the N-terminus, the 231-residue chain is Orotate phosphoribosyltransferase (231 aa).

Lys-29 lines the 5-phospho-alpha-D-ribose 1-diphosphate pocket. Position 37-38 (37-38 (FF)) interacts with orotate. 5-phospho-alpha-D-ribose 1-diphosphate contacts are provided by residues 75 to 76 (YK), Arg-107, Lys-108, Lys-111, His-113, and 133 to 141 (DDVISRCTA). Residues Ser-137 and Arg-165 each coordinate orotate.

This sequence belongs to the purine/pyrimidine phosphoribosyltransferase family. PyrE subfamily. In terms of assembly, homodimer.

The enzyme catalyses orotidine 5'-phosphate + diphosphate = orotate + 5-phospho-alpha-D-ribose 1-diphosphate. Its pathway is pyrimidine metabolism; UMP biosynthesis via de novo pathway; UMP from orotate: step 1/2. Its function is as follows. Catalyzes the transfer of a ribosyl phosphate group from 5-phosphoribose 1-diphosphate to orotate, leading to the formation of orotidine monophosphate (OMP). The sequence is that of Orotate phosphoribosyltransferase (URA5) from Podospora anserina (Pleurage anserina).